Consider the following 569-residue polypeptide: Urease subunit alpha (569 aa).

In terms of domain architecture, Urease spans 131 to 569 (GSIDTHIHFI…VPMAQRYFLL (439 aa)). His-136, His-138, and Lys-219 together coordinate Ni(2+). N6-carboxylysine is present on Lys-219. His-221 contacts substrate. Ni(2+) is bound by residues His-248 and His-274. His-322 functions as the Proton donor in the catalytic mechanism. Asp-362 contacts Ni(2+).

The protein belongs to the metallo-dependent hydrolases superfamily. Urease alpha subunit family. In terms of assembly, heterotrimer of UreA (gamma), UreB (beta) and UreC (alpha) subunits. Three heterotrimers associate to form the active enzyme. The cofactor is Ni cation. Post-translationally, carboxylation allows a single lysine to coordinate two nickel ions.

It localises to the cytoplasm. It carries out the reaction urea + 2 H2O + H(+) = hydrogencarbonate + 2 NH4(+). It functions in the pathway nitrogen metabolism; urea degradation; CO(2) and NH(3) from urea (urease route): step 1/1. This chain is Urease subunit alpha, found in Prochlorococcus marinus (strain MIT 9215).